Here is a 147-residue protein sequence, read N- to C-terminus: Lectin-like protein BA14k (147 aa).

The N-terminal stretch at 1–26 (MNSFRKTCAGALALIFGATSIVPTVA) is a signal peptide. Residues 80–100 (GWWYPLAAFGAGAIIGGAISQ) traverse the membrane as a helical segment.

The protein belongs to the BA14k family.

Its subcellular location is the cell membrane. Functionally, has immunoglobulin-binding and hemagglutination properties, and can bind to mannose. Essential for virulence. May be involved in LPS biosynthesis or polysaccharide transport. The chain is Lectin-like protein BA14k from Brucella abortus (strain S19).